Consider the following 229-residue polypeptide: Cytochrome c oxidase subunit 2 (229 aa).

Residues 1–26 are Mitochondrial intermembrane-facing; that stretch reads MSTWANLGLQDSASPLMEQLIFFHDH. The helical transmembrane segment at 27–48 threads the bilayer; sequence ALLILVMITVLVGYLMFMLFFN. At 49-62 the chain is on the mitochondrial matrix side; the sequence is SYVNRFLLHGQLIE. A helical membrane pass occupies residues 63-82; that stretch reads MIWTILPAIILLFIAMPSLR. The Mitochondrial intermembrane portion of the chain corresponds to 83-229; that stretch reads LLYLLDEINE…IKWISSTVNS (147 aa). 6 residues coordinate Cu cation: H161, C196, E198, C200, H204, and M207. E198 is a binding site for Mg(2+).

Belongs to the cytochrome c oxidase subunit 2 family. In terms of assembly, component of the cytochrome c oxidase (complex IV, CIV), a multisubunit enzyme composed of a catalytic core of 3 subunits and several supernumerary subunits. The complex exists as a monomer or a dimer and forms supercomplexes (SCs) in the inner mitochondrial membrane with ubiquinol-cytochrome c oxidoreductase (cytochrome b-c1 complex, complex III, CIII). Cu cation serves as cofactor.

It is found in the mitochondrion inner membrane. The catalysed reaction is 4 Fe(II)-[cytochrome c] + O2 + 8 H(+)(in) = 4 Fe(III)-[cytochrome c] + 2 H2O + 4 H(+)(out). Functionally, component of the cytochrome c oxidase, the last enzyme in the mitochondrial electron transport chain which drives oxidative phosphorylation. The respiratory chain contains 3 multisubunit complexes succinate dehydrogenase (complex II, CII), ubiquinol-cytochrome c oxidoreductase (cytochrome b-c1 complex, complex III, CIII) and cytochrome c oxidase (complex IV, CIV), that cooperate to transfer electrons derived from NADH and succinate to molecular oxygen, creating an electrochemical gradient over the inner membrane that drives transmembrane transport and the ATP synthase. Cytochrome c oxidase is the component of the respiratory chain that catalyzes the reduction of oxygen to water. Electrons originating from reduced cytochrome c in the intermembrane space (IMS) are transferred via the dinuclear copper A center (CU(A)) of subunit 2 and heme A of subunit 1 to the active site in subunit 1, a binuclear center (BNC) formed by heme A3 and copper B (CU(B)). The BNC reduces molecular oxygen to 2 water molecules using 4 electrons from cytochrome c in the IMS and 4 protons from the mitochondrial matrix. This chain is Cytochrome c oxidase subunit 2 (mt:CoII), found in Drosophila lowei (Fruit fly).